Reading from the N-terminus, the 252-residue chain is 3-dehydroquinate dehydratase (252 aa).

Residues S21, 46–48 (EWR), and R82 contribute to the 3-dehydroquinate site. Residue H143 is the Proton donor/acceptor of the active site. Catalysis depends on K170, which acts as the Schiff-base intermediate with substrate. Positions 213, 232, and 236 each coordinate 3-dehydroquinate.

Belongs to the type-I 3-dehydroquinase family. Homodimer.

It carries out the reaction 3-dehydroquinate = 3-dehydroshikimate + H2O. Its pathway is metabolic intermediate biosynthesis; chorismate biosynthesis; chorismate from D-erythrose 4-phosphate and phosphoenolpyruvate: step 3/7. Functionally, involved in the third step of the chorismate pathway, which leads to the biosynthesis of aromatic amino acids. Catalyzes the cis-dehydration of 3-dehydroquinate (DHQ) and introduces the first double bond of the aromatic ring to yield 3-dehydroshikimate. The sequence is that of 3-dehydroquinate dehydratase from Escherichia coli O8 (strain IAI1).